A 432-amino-acid chain; its full sequence is Adenylosuccinate synthetase (432 aa).

Residues 13-19 (GDEGKGK) and 41-43 (GHT) each bind GTP. Asp14 serves as the catalytic Proton acceptor. Residues Asp14 and Gly41 each coordinate Mg(2+). IMP is bound by residues 14-17 (DEGK), 39-42 (NAGH), Thr130, Arg144, Gln225, Thr240, and Arg304. His42 functions as the Proton donor in the catalytic mechanism. Residue 300 to 306 (AVTGRPR) participates in substrate binding. Residues Arg306, 332–334 (KLD), and 415–417 (STG) contribute to the GTP site.

Belongs to the adenylosuccinate synthetase family. In terms of assembly, homodimer. The cofactor is Mg(2+).

It is found in the cytoplasm. The enzyme catalyses IMP + L-aspartate + GTP = N(6)-(1,2-dicarboxyethyl)-AMP + GDP + phosphate + 2 H(+). It functions in the pathway purine metabolism; AMP biosynthesis via de novo pathway; AMP from IMP: step 1/2. Plays an important role in the de novo pathway of purine nucleotide biosynthesis. Catalyzes the first committed step in the biosynthesis of AMP from IMP. This is Adenylosuccinate synthetase from Mannheimia succiniciproducens (strain KCTC 0769BP / MBEL55E).